A 224-amino-acid chain; its full sequence is Large ribosomal subunit protein uL1 (224 aa).

The protein belongs to the universal ribosomal protein uL1 family. Part of the 50S ribosomal subunit.

Binds directly to 23S rRNA. The L1 stalk is quite mobile in the ribosome, and is involved in E site tRNA release. In terms of biological role, protein L1 is also a translational repressor protein, it controls the translation of the L11 operon by binding to its mRNA. In Borrelia hermsii (strain HS1 / DAH), this protein is Large ribosomal subunit protein uL1.